A 177-amino-acid polypeptide reads, in one-letter code: MLDAFSRVVTNADSKAAYVGGADLQALKKFISEGNKRLDSVNSIVSNASCIVSDAVSGMICENPSLISPSGNCYTNRRMAACLRDGEIILRYVSYALLSGDASVLEDRCLNGLKETYSSLGVPANSNARAVSIMKACAVAFVNNTASQKKLSTPQGDCSGLASEVGGYFDKVTAAIS.

(2R,3E)-phycoerythrobilin contacts are provided by residues Lys28, Asn35, Asp39, Cys50, Asp54, Cys61, Asn72, 77 to 78, Cys82, Arg129, 147 to 148, 154 to 158, and Cys158; these read RR, SQ, and PQGDC. An N4-methylasparagine modification is found at Asn72.

Belongs to the phycobiliprotein family. In terms of assembly, heterotetramer of 2 different alpha chains and 2 identical beta chains. The subunit composition could comprise any combination of 2 out of 4 different alpha units with an invariant beta unit. Contains three covalently linked phycoerythrobilin chromophores.

The protein resides in the plastid. Its subcellular location is the chloroplast thylakoid membrane. Light-harvesting photosynthetic tetrapyrrole chromophore-protein from the phycobiliprotein complex. This is B-phycoerythrin beta chain (cpeB) from Rhodomonas sp. (strain CS 24) (Chroomonas sp. (strain CS24)).